The sequence spans 262 residues: 2-aminoethylphosphonate dioxygenase (262 aa).

Lysine 108 contributes to the 2-oxoglutarate binding site. Fe cation is bound by residues histidine 118, aspartate 120, and histidine 198.

The protein belongs to the PhyH family. The cofactor is Fe(2+).

The catalysed reaction is (2-aminoethyl)phosphonate + 2-oxoglutarate + O2 = (1R)-(2-amino-1-hydroxyethyl)phosphonate + succinate + CO2. Its activity is regulated as follows. Activity is enhanced by ascorbate. Involved in the degradation of the organophosphonate 2-aminoethylphosphonic acid (2-AEP). Catalyzes the hydroxylation of 2-aminoethylphosphonic acid to yield (2-amino-1-hydroxyethyl)phosphonic acid. The polypeptide is 2-aminoethylphosphonate dioxygenase (Uncultured bacterium HF130_AEPn_1).